The chain runs to 145 residues: Secreted RxLR effector protein 43 (145 aa).

The first 20 residues, 1–20, serve as a signal peptide directing secretion; it reads MKVTMALAALCVALQAPCIG. A RxLR motif is present at residues 31-34; sequence RHLR.

Belongs to the RxLR effector family.

The protein resides in the secreted. The protein localises to the host nucleus. It localises to the host cytoplasm. Secreted effector that completely suppresses the host cell death induced by cell death-inducing proteins. The polypeptide is Secreted RxLR effector protein 43 (Plasmopara viticola (Downy mildew of grapevine)).